The sequence spans 730 residues: uncharacterized protein (730 aa).

Over residues 615 to 625 (FDKENSFDPSD) the composition is skewed to basic and acidic residues. 2 disordered regions span residues 615–667 (FDKE…SSFS) and 684–730 (KSGS…FGKI). Low complexity-rich tracts occupy residues 653 to 667 (SSSSAGSKKSSSSFS) and 684 to 701 (KSGSSSGNKSSSRRNSSS). The segment covering 713 to 723 (KKKKKKKKKKS) has biased composition (basic residues).

This is an uncharacterized protein from Saccharomyces cerevisiae (strain ATCC 204508 / S288c) (Baker's yeast).